Reading from the N-terminus, the 203-residue chain is Ras-related protein Rab-24 (203 aa).

The residue at position 17 (Y17) is a Phosphotyrosine. Residues G19, K20, T21, and T40 each contribute to the GTP site. Residues T21, T40, and D63 each coordinate Mg(2+). Positions 30–45 are switch I; the sequence is DRFLVGPYQNTIGAAF. The interval 63-80 is switch II; it reads DTAGSERYEAMSRIYYRG. Positions 66, 121, 123, and 156 each coordinate GTP. Phosphotyrosine is present on Y172. S-geranylgeranyl cysteine attachment occurs at residues C200 and C201.

Belongs to the small GTPase superfamily. Rab family. Interacts with ZFYVE20. Does not interact with the GDP dissociation inhibitors ARHGDIA and ARHGDIB. It depends on Mg(2+) as a cofactor. In terms of processing, prenylated; prenylation is required for RAB24 localization to autophagosomes. Isoprenylation is inefficient compared to other Rab family members. Phosphorylated at Tyr-17 and Tyr-172. Cytosolic pool of RAB24 is more phosphorylated than the membrane-associated pool. As to expression, widely expressed, with highest expression in brain.

Its subcellular location is the cytoplasm. The protein resides in the cytosol. It localises to the membrane. The protein localises to the cytoplasmic vesicle. It is found in the autophagosome membrane. Its subcellular location is the perinuclear region. The protein resides in the cytoskeleton. It localises to the spindle. The catalysed reaction is GTP + H2O = GDP + phosphate + H(+). With respect to regulation, regulated by guanine nucleotide exchange factors (GEFs) which promote the exchange of bound GDP for free GTP. Regulated by GTPase activating proteins (GAPs) which increase the GTP hydrolysis activity. Inhibited by GDP dissociation inhibitors (GDIs). Functionally, the small GTPases Rab are key regulators of intracellular membrane trafficking, from the formation of transport vesicles to their fusion with membranes. Rabs cycle between an inactive GDP-bound form and an active GTP-bound form that is able to recruit to membranes different sets of downstream effectors directly responsible for vesicle formation, movement, tethering and fusion. RAB24 is an atypical RAB protein that presents low GTPase activity and thereby exists predominantly in the GTP-bound active state. RAB24 is required for the clearance of late autophagic vacuoles under basal conditions. It is not needed for starvation-induced autophagy. Involved in the modulation of meiotic apparatus assembly and meiotic progression during oocyte maturation, possibly through regulation of kinetochore-microtubule interaction. In Mus musculus (Mouse), this protein is Ras-related protein Rab-24.